The sequence spans 242 residues: DNA repair protein RecO (242 aa).

Belongs to the RecO family. Monomer.

Its function is as follows. Involved in DNA repair and RecF pathway recombination. The chain is DNA repair protein RecO from Shigella boydii serotype 18 (strain CDC 3083-94 / BS512).